The following is a 231-amino-acid chain: Ion-translocating oxidoreductase complex subunit E (231 aa).

The next 6 helical transmembrane spans lie at 18 to 38 (ALVQ…ATNA), 39 to 59 (LGLG…ISTL), 63 to 83 (TPAE…VSAV), 86 to 106 (LINA…PLIV), 125 to 145 (ALSA…MCVL), and 182 to 202 (PFLL…MLAG).

This sequence belongs to the NqrDE/RnfAE family. The complex is composed of six subunits: RsxA, RsxB, RsxC, RsxD, RsxE and RsxG.

The protein localises to the cell inner membrane. Functionally, part of a membrane-bound complex that couples electron transfer with translocation of ions across the membrane. Required to maintain the reduced state of SoxR. In Escherichia coli (strain SMS-3-5 / SECEC), this protein is Ion-translocating oxidoreductase complex subunit E.